We begin with the raw amino-acid sequence, 2890 residues long: Bifunctional DNA-directed RNA polymerase subunit beta-beta' (2890 aa).

The DNA-directed RNA polymerase subunit beta stretch occupies residues 1–1377 (MSKKIPLKNR…DINIFGDEMD (1377 aa)). Residues 1384–2890 (PIVIKEDDRP…LRTIEDSPKI (1507 aa)) are DNA-directed RNA polymerase subunit beta'. Zn(2+) is bound by residues C1449, C1451, C1465, and C1468. Residues D1849, D1851, and D1853 each contribute to the Mg(2+) site. Zn(2+) is bound by residues C2179, C2253, C2260, and C2263.

In the N-terminal section; belongs to the RNA polymerase beta chain family. The protein in the C-terminal section; belongs to the RNA polymerase beta' chain family. As to quaternary structure, the RNAP catalytic core consists of 2 alpha, 1 beta/beta' and 1 omega subunit. When a sigma factor is associated with the core the holoenzyme is formed, which can initiate transcription. It depends on Mg(2+) as a cofactor. Zn(2+) is required as a cofactor.

The catalysed reaction is RNA(n) + a ribonucleoside 5'-triphosphate = RNA(n+1) + diphosphate. DNA-dependent RNA polymerase catalyzes the transcription of DNA into RNA using the four ribonucleoside triphosphates as substrates. This Helicobacter acinonychis (strain Sheeba) protein is Bifunctional DNA-directed RNA polymerase subunit beta-beta' (rpoBC).